The primary structure comprises 315 residues: Protein OPG185 (315 aa).

Positions 1 to 16 (MARLPILLLLISLVYS) are cleaved as a signal peptide. An Ig-like V-type domain is found at 17–121 (TPSPQTSKKI…NDTDKVDYEE (105 aa)). Topologically, residues 17-279 (TPSPQTSKKI…SNYKTKDFVE (263 aa)) are virion surface. Cysteines 34 and 103 form a disulfide. N-linked (GlcNAc...) asparagine; by host glycosylation is found at asparagine 37, asparagine 69, asparagine 112, and asparagine 161. The segment covering 192 to 202 (INTVSASSGES) has biased composition (polar residues). Positions 192 to 214 (INTVSASSGESTTDETPEPITDK) are disordered. Asparagine 254 is a glycosylation site (N-linked (GlcNAc...) asparagine; by host). A helical transmembrane segment spans residues 280-303 (IFGITALIILSAVAIFCITYYIYN). Residues 304–315 (KRSRKYKTENKV) lie on the Intravirion side of the membrane.

This sequence belongs to the orthopoxvirus OPG185 family. Heterodimerizes with OPG040. The heterodimer OPG185-OPG040 interacts with components of the entry fusion complex OPG143 and OPG094. Heterodimer with C3/VPC protein; disulfide-linked. In terms of processing, glycosylated; contains phosphate and sulfate-substituted glycans. O-glycosylation is required for hemagglutination and hemadsorption activities of infected cell membranes.

It localises to the virion membrane. Its subcellular location is the host membrane. Prevents cell to cell fusion by interacting with and directing the viral OPG040 protein on the host plasma membrane. The OPG185-OPG040 complex associates with components of the entry fusion complex (EFC) presumably to avoid superinfection and syncytium formation. Via its interaction with C3/VCP protein, protects the infected cell and probably also the extracellular enveloped virus from complement attack. In Vaccinia virus (strain Tian Tan) (VACV), this protein is Protein OPG185 (OPG185).